Reading from the N-terminus, the 306-residue chain is Homoserine kinase (306 aa).

Pro-90–Ser-100 is an ATP binding site.

This sequence belongs to the GHMP kinase family. Homoserine kinase subfamily.

Its subcellular location is the cytoplasm. The catalysed reaction is L-homoserine + ATP = O-phospho-L-homoserine + ADP + H(+). It participates in amino-acid biosynthesis; L-threonine biosynthesis; L-threonine from L-aspartate: step 4/5. In terms of biological role, catalyzes the ATP-dependent phosphorylation of L-homoserine to L-homoserine phosphate. This Staphylococcus epidermidis (strain ATCC 12228 / FDA PCI 1200) protein is Homoserine kinase.